Here is a 160-residue protein sequence, read N- to C-terminus: Large ribosomal subunit protein eL21 (160 aa).

Basic and acidic residues-rich tracts occupy residues 112–123 (NDQKKKEAKEKG) and 136–145 (REAHFVRTNG). Residues 112-145 (NDQKKKEAKEKGTWVQLKRQPAPPREAHFVRTNG) form a disordered region.

It belongs to the eukaryotic ribosomal protein eL21 family. In terms of assembly, component of the large ribosomal subunit.

It is found in the cytoplasm. The protein localises to the cytosol. Its subcellular location is the endoplasmic reticulum. In terms of biological role, component of the large ribosomal subunit. The ribosome is a large ribonucleoprotein complex responsible for the synthesis of proteins in the cell. This Mus musculus (Mouse) protein is Large ribosomal subunit protein eL21.